The following is a 255-amino-acid chain: Pre-miRNA 5'-monophosphate methyltransferase (255 aa).

S-adenosyl-L-methionine contacts are provided by residues arginine 32, asparagine 66, aspartate 96, 121 to 122, and methionine 150; that span reads DI. In terms of domain architecture, Bin3-type SAM spans 41-253; the sequence is LHKLFRKPAE…SLLLFKIQRH (213 aa).

Belongs to the methyltransferase superfamily.

It is found in the cytoplasm. The catalysed reaction is a 5'-end 5'-phospho-ribonucleoside-RNA + S-adenosyl-L-methionine = a 5'-end (5'-methylphospho)-ribonucleoside-RNA + S-adenosyl-L-homocysteine. It carries out the reaction a 5'-end 5'-phospho-ribonucleoside-RNA + 2 S-adenosyl-L-methionine = a 5'-end (5'-bismethylphospho)-ribonucleoside-RNA + 2 S-adenosyl-L-homocysteine. Functionally, O-methyltransferase that specifically monomethylates 5'-monophosphate of cytoplasmic histidyl tRNA (tRNA(His)), acting as a capping enzyme by protecting tRNA(His) from cleavage by DICER1. Also able, with less efficiently, to methylate the 5' monophosphate of a subset of pre-miRNAs, acting as a negative regulator of miRNA processing. The 5' monophosphate of pre-miRNAs is recognized by DICER1 and is required for pre-miRNAs processing: methylation at this position reduces the processing of pre-miRNAs by DICER1. Was also reported to mediate dimethylation of pre-miR-145; however dimethylation cannot be reproduced by another group which observes a monomethylation of pre-miR-145. In Xenopus laevis (African clawed frog), this protein is Pre-miRNA 5'-monophosphate methyltransferase (bcdin3d).